The primary structure comprises 2492 residues: Polyketide synthase 19 (2492 aa).

The region spanning 12-463 (REPIAIVGTS…GTNAHAIVES (452 aa)) is the Ketosynthase family 3 (KS3) domain. Residues Cys202, His341, and His383 each act as for beta-ketoacyl synthase activity in the active site. The segment at 571-866 (VFTGQGAQWA…LEVGPHPALK (296 aa)) is malonyl-CoA:ACP transacylase (MAT) domain. Residues 967-1110 (HELLGRSVSH…GRIRLWLEQP (144 aa)) form an N-terminal hotdog fold region. Positions 967-1270 (HELLGRSVSH…GVQMTAIGKP (304 aa)) are dehydratase (DH) domain. Residues 967-1273 (HELLGRSVSH…MTAIGKPPDR (307 aa)) enclose the PKS/mFAS DH domain. Catalysis depends on His1001, which acts as the Proton acceptor; for dehydratase activity. The segment at 1125–1273 (MSELNMAQVY…MTAIGKPPDR (149 aa)) is C-terminal hotdog fold. Asp1183 acts as the Proton donor; for dehydratase activity in catalysis. The interval 1431 to 1604 (LGAIVKQLGH…KTTGFSGVDI (174 aa)) is C-methyltransferase (CMeT) domain. The segment at 2118 to 2293 (SYLLFGMTGD…AGSIVHISVL (176 aa)) is ketoreductase (KR) domain. The 76-residue stretch at 2404 to 2479 (PILEKRFAQA…RVCDDVLVDW (76 aa)) folds into the Carrier domain. The residue at position 2438 (Ser2438) is an O-(pantetheine 4'-phosphoryl)serine.

Its function is as follows. Highly reducing polyketide synthase; part of the gene cluster that mediates the biosynthesis of fujikurins A-D, secondary metabolites playing a role during rice infection. The polyketide synthase PKS19 acts with the trans-enoyl reductase FFUJ_12240 and the polyketide transferase FFUJ_12241 to produce fujikurins, however, the biosynthesis pathway has not been identified yet. This chain is Polyketide synthase 19, found in Gibberella fujikuroi (strain CBS 195.34 / IMI 58289 / NRRL A-6831) (Bakanae and foot rot disease fungus).